The chain runs to 123 residues: Protein TraJ (123 aa).

In terms of assembly, monomer.

The protein resides in the cytoplasm. In terms of biological role, transfer of plasmid RP4 during bacterial conjugation requires the plasmid-encoded TraJ protein, which binds to a 19-base pair invert sequence repetition within the transfer origin. TraJ protein is bound to only one side of the DNA helix. This nucleoprotein structure is the initial complex in the pathway to assemble a functional relaxosome. The polypeptide is Protein TraJ (traJ) (Escherichia coli).